The chain runs to 279 residues: Protein gustavus (279 aa).

Positions 36–233 constitute a B30.2/SPRY domain; the sequence is PARIDILLDM…ITMRYIGGLD (198 aa). One can recognise an SOCS box domain in the interval 234 to 279; sequence PEPLPLMDLCRRTIRQKIGRTNLEEHIQQLQLPLSMKTYLLYKNRR. The interval 236-279 is involved in binding to the Elongin BC complex; sequence PLPLMDLCRRTIRQKIGRTNLEEHIQQLQLPLSMKTYLLYKNRR.

It belongs to the SPSB family. As to quaternary structure, interacts (via B30.2/SPRY domain) with vas; this interaction may be necessary for the transport of vas to the posterior pole of the oocyte. Interacts with Cul-5. May associate with the Elongin BC complex composed of Elongin-B and Elongin-C. In terms of tissue distribution, expressed in ovaries, primarily in nurse cells and oocytes (at protein level).

It is found in the cytoplasm. The protein resides in the nucleus. Its function is as follows. Involved in the localization of vas to the posterior pole of the oocyte. Required maternally in the germ line for efficient primordial germ cell formation. The chain is Protein gustavus (gus) from Drosophila melanogaster (Fruit fly).